The following is a 129-amino-acid chain: Lysozyme C (129 aa).

In terms of domain architecture, C-type lysozyme spans 1-129 (KVFSKCELAH…LSEYLASCNL (129 aa)). Disulfide bonds link cysteine 6/cysteine 127, cysteine 30/cysteine 115, cysteine 65/cysteine 80, and cysteine 76/cysteine 94. Catalysis depends on residues glutamate 35 and aspartate 53. Residues lysine 82, aspartate 85, asparagine 87, aspartate 90, and aspartate 91 each coordinate Ca(2+).

This sequence belongs to the glycosyl hydrolase 22 family. As to quaternary structure, monomer. It depends on Ca(2+) as a cofactor.

The catalysed reaction is Hydrolysis of (1-&gt;4)-beta-linkages between N-acetylmuramic acid and N-acetyl-D-glucosamine residues in a peptidoglycan and between N-acetyl-D-glucosamine residues in chitodextrins.. Its function is as follows. Lysozymes have primarily a bacteriolytic function; those in tissues and body fluids are associated with the monocyte-macrophage system and enhance the activity of immunoagents. In Equus asinus (Donkey), this protein is Lysozyme C (LYZ).